The primary structure comprises 483 residues: Zinc metalloproteinase/disintegrin (483 aa).

The N-terminal stretch at 1-20 is a signal peptide; that stretch reads MIQVLLVTLCLAAFPYQGSS. A propeptide spanning residues 21 to 190 is cleaved from the precursor; that stretch reads IILESGNVND…KKASQLNLTP (170 aa). The 197-residue stretch at 198–394 folds into the Peptidase M12B domain; that stretch reads RYIELVVVAD…HNPQCMLNEP (197 aa). The Ca(2+) site is built by E201 and D285. Cystine bridges form between C309/C389, C349/C373, and C351/C356. Zn(2+) is bound at residue H334. E335 is an active-site residue. Zn(2+) contacts are provided by H338 and H344. Ca(2+)-binding residues include C389 and N392. Residues 395 to 418 constitute a propeptide that is removed on maturation; that stretch reads LRTDIVSTPVSGNELLETGEESDF. Positions 402–483 constitute a Disintegrin domain; the sequence is TPVSGNELLE…AGCPRNPFHA (82 aa). 4 disulfides stabilise this stretch: C425/C448, C439/C445, C444/C469, and C457/C476. Residues 461–463 carry the Cell attachment site motif; it reads RGD.

This sequence belongs to the venom metalloproteinase (M12B) family. P-II subfamily. P-IId sub-subfamily. As to quaternary structure, homodimer; disulfide-linked (disintegrin). Zn(2+) is required as a cofactor. As to expression, expressed by the venom gland.

The protein resides in the secreted. Functionally, impairs hemostasis in the envenomed animal. This protein has not been identified in the venom. Inhibits ADP-induced platelet aggregation. Binds and inhibits integrins GPIIb/GPIIIa (ITGA2B/ITGB3), alpha-5/beta-1 (ITGA5/ITGB1), alpha-V/beta-3 (ITGAV/ITGB3), and alpha-V/beta-5 (ITGAV/ITGB5). It blocks cancer cell adhesion (tested on human breast cancer cell line MDA-MB-435) to fibronectin and vitronectin and thus prevents invasion of cancer cells. This chain is Zinc metalloproteinase/disintegrin, found in Agkistrodon contortrix contortrix (Southern copperhead).